A 493-amino-acid polypeptide reads, in one-letter code: FAD-linked oxidoreductase tazL (493 aa).

Residues 1–17 (MRSNTVILAALPLVASA) form the signal peptide. Asn-29, Asn-41, Asn-53, Asn-91, Asn-253, Asn-318, and Asn-387 each carry an N-linked (GlcNAc...) asparagine glycan. The FAD-binding PCMH-type domain occupies 63–235 (WAEPTFAVTI…TSATYEIFDA (173 aa)).

The protein belongs to the oxygen-dependent FAD-linked oxidoreductase family.

It participates in secondary metabolite biosynthesis. Its function is as follows. FAD-linked oxidoreductase; part of the gene cluster that mediates the biosynthesis of azaterrilone A and other azaphilones, a class of fungal metabolites characterized by a highly oxygenated pyrano-quinone bicyclic core and exhibiting a broad range of bioactivities. The first step of the pathway begins with the non-reducing polyketide synthase tazA that assembles one acetyl-CoA starter unit, five malonyl-CoA units, and catalyzes a series of Claisen condensations, methylation, PT-mediated cyclization, and finally releases the first hexaketide precursor through the R-domain. The tazA product then undergoes reduction on its terminal ketone and the following pyran-ring formation by yet undetermined enzyme(s). Dehydration and enoyl reduction, possibly involving the trans-enoyl reductase tazE leads to the next intermediate. TazD is predicted as an acetyltransferase and might catalyze the acetylation steps leading to the synthesis of azaterrilone A. Azaterrilone A is not the final product of the taz pathway and both the highly reducing polyketide synthase tazB and the dual enzyme tazHJ catalyze late steps of the pathway, leading to the production of the 2 final stereoisomers that contain additional polyketide modification whose structures have still to be determined. This Aspergillus terreus (strain NIH 2624 / FGSC A1156) protein is FAD-linked oxidoreductase tazL.